The following is a 255-amino-acid chain: MAGHSKWANIKRQKERVDAKKGKTFAQLSRAIIVAARHGLPDPTGNFQLRTAIEKAKAAGIPNENIERAIAKGAGTYENDDTIYEEIRYEGYGPGGVAILIEALTDNRNRTAADLRAAFSKRGGNLGETGCVSWMFDQKGVILIEGEVNEDRLLEASVEGGADSYELFSEDEEIGAEVFTEVTNLERLTQTLKEKQFNVTEAELRWIPNNRMDVNDPEQARSLLKLIDALESLDDVQNVTANFEIAEELMMANVA.

It belongs to the TACO1 family.

Its subcellular location is the cytoplasm. The protein is Probable transcriptional regulatory protein PCC8801_2028 of Rippkaea orientalis (strain PCC 8801 / RF-1) (Cyanothece sp. (strain PCC 8801)).